The chain runs to 185 residues: Ribosome-recycling factor (185 aa).

The segment at 137–159 (EDLKADEKAKDISEDDRKRMEDE) is disordered.

It belongs to the RRF family.

The protein resides in the cytoplasm. Functionally, responsible for the release of ribosomes from messenger RNA at the termination of protein biosynthesis. May increase the efficiency of translation by recycling ribosomes from one round of translation to another. In Erythrobacter litoralis (strain HTCC2594), this protein is Ribosome-recycling factor.